A 302-amino-acid chain; its full sequence is Nucleotide-binding protein Bcep1808_2900 (302 aa).

Residue 8-15 participates in ATP binding; that stretch reads GISGSGKS. Residue 57 to 60 coordinates GTP; the sequence is DARS.

The protein belongs to the RapZ-like family.

Functionally, displays ATPase and GTPase activities. The protein is Nucleotide-binding protein Bcep1808_2900 of Burkholderia vietnamiensis (strain G4 / LMG 22486) (Burkholderia cepacia (strain R1808)).